A 364-amino-acid chain; its full sequence is tRNA N6-adenosine threonylcarbamoyltransferase (364 aa).

Positions 118 and 122 each coordinate Fe cation. Residues 140–144 (LVSGG), D173, G186, and N288 each bind substrate. Residue D316 participates in Fe cation binding.

Belongs to the KAE1 / TsaD family. Fe(2+) serves as cofactor.

It localises to the cytoplasm. The catalysed reaction is L-threonylcarbamoyladenylate + adenosine(37) in tRNA = N(6)-L-threonylcarbamoyladenosine(37) in tRNA + AMP + H(+). Required for the formation of a threonylcarbamoyl group on adenosine at position 37 (t(6)A37) in tRNAs that read codons beginning with adenine. Is involved in the transfer of the threonylcarbamoyl moiety of threonylcarbamoyl-AMP (TC-AMP) to the N6 group of A37, together with TsaE and TsaB. TsaD likely plays a direct catalytic role in this reaction. This chain is tRNA N6-adenosine threonylcarbamoyltransferase, found in Cereibacter sphaeroides (strain ATCC 17023 / DSM 158 / JCM 6121 / CCUG 31486 / LMG 2827 / NBRC 12203 / NCIMB 8253 / ATH 2.4.1.) (Rhodobacter sphaeroides).